Reading from the N-terminus, the 1402-residue chain is DNA-directed RNA polymerase subunit beta' (1402 aa).

Residues cysteine 73, cysteine 75, cysteine 88, and cysteine 91 each contribute to the Zn(2+) site. Mg(2+) is bound by residues aspartate 464, aspartate 466, and aspartate 468. Positions 812, 886, 893, and 896 each coordinate Zn(2+).

Belongs to the RNA polymerase beta' chain family. In terms of assembly, the RNAP catalytic core consists of 2 alpha, 1 beta, 1 beta' and 1 omega subunit. When a sigma factor is associated with the core the holoenzyme is formed, which can initiate transcription. Requires Mg(2+) as cofactor. The cofactor is Zn(2+).

The catalysed reaction is RNA(n) + a ribonucleoside 5'-triphosphate = RNA(n+1) + diphosphate. Functionally, DNA-dependent RNA polymerase catalyzes the transcription of DNA into RNA using the four ribonucleoside triphosphates as substrates. The sequence is that of DNA-directed RNA polymerase subunit beta' from Rhodopseudomonas palustris (strain ATCC BAA-98 / CGA009).